The chain runs to 94 residues: Integration host factor subunit beta (94 aa).

The protein belongs to the bacterial histone-like protein family. As to quaternary structure, heterodimer of an alpha and a beta chain.

This protein is one of the two subunits of integration host factor, a specific DNA-binding protein that functions in genetic recombination as well as in transcriptional and translational control. The sequence is that of Integration host factor subunit beta (ihfB) from Haemophilus influenzae (strain ATCC 51907 / DSM 11121 / KW20 / Rd).